Reading from the N-terminus, the 76-residue chain is uncharacterized protein (76 aa).

This sequence to M.jannaschii MJ0857 N-terminal region.

This is an uncharacterized protein from Methanocaldococcus jannaschii (strain ATCC 43067 / DSM 2661 / JAL-1 / JCM 10045 / NBRC 100440) (Methanococcus jannaschii).